The primary structure comprises 336 residues: Dihydroorotate dehydrogenase (quinone) (336 aa).

FMN contacts are provided by residues 62–66 and Thr86; that span reads AGLDK. Lys66 provides a ligand contact to substrate. 111-115 is a binding site for substrate; it reads NRMGF. 2 residues coordinate FMN: Asn139 and Asn172. Asn172 contacts substrate. Ser175 serves as the catalytic Nucleophile. A substrate-binding site is contributed by Asn177. FMN is bound by residues Lys217 and Thr245. 246–247 contributes to the substrate binding site; sequence NT. Residues Gly268, Gly297, and 318–319 contribute to the FMN site; that span reads YS.

This sequence belongs to the dihydroorotate dehydrogenase family. Type 2 subfamily. In terms of assembly, monomer. Requires FMN as cofactor.

It localises to the cell membrane. The enzyme catalyses (S)-dihydroorotate + a quinone = orotate + a quinol. The protein operates within pyrimidine metabolism; UMP biosynthesis via de novo pathway; orotate from (S)-dihydroorotate (quinone route): step 1/1. Catalyzes the conversion of dihydroorotate to orotate with quinone as electron acceptor. The polypeptide is Dihydroorotate dehydrogenase (quinone) (Aeromonas salmonicida (strain A449)).